A 373-amino-acid polypeptide reads, in one-letter code: Transaldolase (373 aa).

The active-site Schiff-base intermediate with substrate is K143.

This sequence belongs to the transaldolase family. Type 2 subfamily.

It localises to the cytoplasm. It carries out the reaction D-sedoheptulose 7-phosphate + D-glyceraldehyde 3-phosphate = D-erythrose 4-phosphate + beta-D-fructose 6-phosphate. It participates in carbohydrate degradation; pentose phosphate pathway; D-glyceraldehyde 3-phosphate and beta-D-fructose 6-phosphate from D-ribose 5-phosphate and D-xylulose 5-phosphate (non-oxidative stage): step 2/3. Its function is as follows. Transaldolase is important for the balance of metabolites in the pentose-phosphate pathway. The polypeptide is Transaldolase (tal) (Mycobacterium bovis (strain ATCC BAA-935 / AF2122/97)).